Consider the following 134-residue polypeptide: Small ribosomal subunit protein uS11 (134 aa).

The protein belongs to the universal ribosomal protein uS11 family. In terms of assembly, part of the 30S ribosomal subunit. Interacts with proteins S7 and S18. Binds to IF-3.

Its function is as follows. Located on the platform of the 30S subunit, it bridges several disparate RNA helices of the 16S rRNA. Forms part of the Shine-Dalgarno cleft in the 70S ribosome. The chain is Small ribosomal subunit protein uS11 from Parafrankia sp. (strain EAN1pec).